A 137-amino-acid chain; its full sequence is ATP synthase epsilon chain (137 aa).

The protein belongs to the ATPase epsilon chain family. F-type ATPases have 2 components, CF(1) - the catalytic core - and CF(0) - the membrane proton channel. CF(1) has five subunits: alpha(3), beta(3), gamma(1), delta(1), epsilon(1). CF(0) has three main subunits: a, b and c.

It localises to the cell inner membrane. Functionally, produces ATP from ADP in the presence of a proton gradient across the membrane. In Magnetococcus marinus (strain ATCC BAA-1437 / JCM 17883 / MC-1), this protein is ATP synthase epsilon chain.